The sequence spans 202 residues: Superoxide dismutase [Mn] (202 aa).

Positions 27, 82, 164, and 168 each coordinate Mn(2+).

The protein belongs to the iron/manganese superoxide dismutase family. In terms of assembly, homodimer. Mn(2+) is required as a cofactor.

It carries out the reaction 2 superoxide + 2 H(+) = H2O2 + O2. In terms of biological role, destroys superoxide anion radicals which are normally produced within the cells and which are toxic to biological systems. The polypeptide is Superoxide dismutase [Mn] (sodA) (Listeria monocytogenes serovar 1/2a (strain ATCC BAA-679 / EGD-e)).